Reading from the N-terminus, the 123-residue chain is Large ribosomal subunit protein bL19c (123 aa).

It belongs to the bacterial ribosomal protein bL19 family.

Its subcellular location is the plastid. The protein resides in the chloroplast. This is Large ribosomal subunit protein bL19c from Pyropia yezoensis (Susabi-nori).